A 270-amino-acid chain; its full sequence is MPELPEVETTRRGVEPHLEGRTLLGAVVRNPSLRWPVPPDLSERVAGEKVLAVRRRAKYLLLECESGTLLIHLGMSGSLRVMPAGAPPQKHDHLDLLLGEQVLRFRDPRRFGAVLWHLGPVEMHPLLQALGPEPLSDAFDGAALHQAIRRRGSPIKLAIMDNHVVVGVGNIYANESLFHAGISPARAACDLSRADCDRLAAEIKAVLRRAIDAGGSTLRDFVDSEGKPGYFQQTYMVYNRQEEPCRLCGTPIRQIRQGQRSTYYCPLCQP.

Proline 2 (schiff-base intermediate with DNA) is an active-site residue. Catalysis depends on glutamate 3, which acts as the Proton donor. Lysine 58 serves as the catalytic Proton donor; for beta-elimination activity. DNA contacts are provided by histidine 91, arginine 109, and arginine 151. The segment at 236 to 270 adopts an FPG-type zinc-finger fold; the sequence is MVYNRQEEPCRLCGTPIRQIRQGQRSTYYCPLCQP. The active-site Proton donor; for delta-elimination activity is the arginine 260.

The protein belongs to the FPG family. Monomer. The cofactor is Zn(2+).

It catalyses the reaction Hydrolysis of DNA containing ring-opened 7-methylguanine residues, releasing 2,6-diamino-4-hydroxy-5-(N-methyl)formamidopyrimidine.. The enzyme catalyses 2'-deoxyribonucleotide-(2'-deoxyribose 5'-phosphate)-2'-deoxyribonucleotide-DNA = a 3'-end 2'-deoxyribonucleotide-(2,3-dehydro-2,3-deoxyribose 5'-phosphate)-DNA + a 5'-end 5'-phospho-2'-deoxyribonucleoside-DNA + H(+). Involved in base excision repair of DNA damaged by oxidation or by mutagenic agents. Acts as a DNA glycosylase that recognizes and removes damaged bases. Has a preference for oxidized purines, such as 7,8-dihydro-8-oxoguanine (8-oxoG). Has AP (apurinic/apyrimidinic) lyase activity and introduces nicks in the DNA strand. Cleaves the DNA backbone by beta-delta elimination to generate a single-strand break at the site of the removed base with both 3'- and 5'-phosphates. This chain is Formamidopyrimidine-DNA glycosylase, found in Chromobacterium violaceum (strain ATCC 12472 / DSM 30191 / JCM 1249 / CCUG 213 / NBRC 12614 / NCIMB 9131 / NCTC 9757 / MK).